Reading from the N-terminus, the 363-residue chain is 3-isopropylmalate dehydrogenase (363 aa).

78–91 (GKKWDDLPINQRPE) lines the NAD(+) pocket. R99, R109, R138, and D227 together coordinate substrate. Residues D227, D251, and D255 each coordinate Mg(2+). 285 to 297 (GSAPDIEGKNIAN) provides a ligand contact to NAD(+).

The protein belongs to the isocitrate and isopropylmalate dehydrogenases family. LeuB type 1 subfamily. As to quaternary structure, homodimer. The cofactor is Mg(2+). It depends on Mn(2+) as a cofactor.

It localises to the cytoplasm. It carries out the reaction (2R,3S)-3-isopropylmalate + NAD(+) = 4-methyl-2-oxopentanoate + CO2 + NADH. It functions in the pathway amino-acid biosynthesis; L-leucine biosynthesis; L-leucine from 3-methyl-2-oxobutanoate: step 3/4. Catalyzes the oxidation of 3-carboxy-2-hydroxy-4-methylpentanoate (3-isopropylmalate) to 3-carboxy-4-methyl-2-oxopentanoate. The product decarboxylates to 4-methyl-2 oxopentanoate. The protein is 3-isopropylmalate dehydrogenase of Buchnera aphidicola subsp. Uroleucon rudbeckiae.